The chain runs to 292 residues: 4-hydroxy-tetrahydrodipicolinate synthase (292 aa).

Threonine 45 provides a ligand contact to pyruvate. The active-site Proton donor/acceptor is the tyrosine 133. The active-site Schiff-base intermediate with substrate is the lysine 161. Residue isoleucine 203 coordinates pyruvate.

This sequence belongs to the DapA family. In terms of assembly, homotetramer; dimer of dimers.

Its subcellular location is the cytoplasm. The catalysed reaction is L-aspartate 4-semialdehyde + pyruvate = (2S,4S)-4-hydroxy-2,3,4,5-tetrahydrodipicolinate + H2O + H(+). It functions in the pathway amino-acid biosynthesis; L-lysine biosynthesis via DAP pathway; (S)-tetrahydrodipicolinate from L-aspartate: step 3/4. In terms of biological role, catalyzes the condensation of (S)-aspartate-beta-semialdehyde [(S)-ASA] and pyruvate to 4-hydroxy-tetrahydrodipicolinate (HTPA). The chain is 4-hydroxy-tetrahydrodipicolinate synthase from Salmonella arizonae (strain ATCC BAA-731 / CDC346-86 / RSK2980).